The following is a 118-amino-acid chain: Basic phospholipase A2 nigroxin B (118 aa).

7 disulfides stabilise this stretch: C11/C70, C25/C117, C27/C43, C42/C98, C49/C91, C59/C84, and C77/C89. Y26, G28, and G30 together coordinate Ca(2+). Residue H46 is part of the active site. D47 serves as a coordination point for Ca(2+). D92 is a catalytic residue.

It belongs to the phospholipase A2 family. Group I subfamily. D49 sub-subfamily. Ca(2+) serves as cofactor. Expressed by the venom gland.

It localises to the secreted. It carries out the reaction a 1,2-diacyl-sn-glycero-3-phosphocholine + H2O = a 1-acyl-sn-glycero-3-phosphocholine + a fatty acid + H(+). Its function is as follows. Snake venom phospholipase A2 (PLA2) that has only a weak enzymatic activity. It has a myotoxic activity in vivo (dystrophic effect). PLA2 catalyzes the calcium-dependent hydrolysis of the 2-acyl groups in 3-sn-phosphoglycerides. The chain is Basic phospholipase A2 nigroxin B from Micrurus nigrocinctus (Central American coral snake).